A 468-amino-acid chain; its full sequence is 3-isopropylmalate dehydratase large subunit (468 aa).

3 residues coordinate [4Fe-4S] cluster: Cys-347, Cys-407, and Cys-410. Over residues 424–441 (SASSSNRNFKGRQGSPSG) the composition is skewed to polar residues. Residues 424 to 443 (SASSSNRNFKGRQGSPSGRT) are disordered.

This sequence belongs to the aconitase/IPM isomerase family. LeuC type 1 subfamily. As to quaternary structure, heterodimer of LeuC and LeuD. The cofactor is [4Fe-4S] cluster.

The catalysed reaction is (2R,3S)-3-isopropylmalate = (2S)-2-isopropylmalate. The protein operates within amino-acid biosynthesis; L-leucine biosynthesis; L-leucine from 3-methyl-2-oxobutanoate: step 2/4. Its function is as follows. Catalyzes the isomerization between 2-isopropylmalate and 3-isopropylmalate, via the formation of 2-isopropylmaleate. This is 3-isopropylmalate dehydratase large subunit from Prochlorococcus marinus (strain MIT 9215).